The chain runs to 209 residues: Glycerol-3-phosphate acyltransferase (209 aa).

5 helical membrane passes run 7–27 (IELA…AIIV), 85–105 (AIIL…FFGF), 117–137 (VMFG…LFVA), 142–162 (ISSL…YLLA), and 166–183 (MAWV…FWRH).

The protein belongs to the PlsY family. Probably interacts with PlsX.

The protein resides in the cell inner membrane. The enzyme catalyses an acyl phosphate + sn-glycerol 3-phosphate = a 1-acyl-sn-glycero-3-phosphate + phosphate. It participates in lipid metabolism; phospholipid metabolism. Catalyzes the transfer of an acyl group from acyl-phosphate (acyl-PO(4)) to glycerol-3-phosphate (G3P) to form lysophosphatidic acid (LPA). This enzyme utilizes acyl-phosphate as fatty acyl donor, but not acyl-CoA or acyl-ACP. The polypeptide is Glycerol-3-phosphate acyltransferase (Hydrogenovibrio crunogenus (strain DSM 25203 / XCL-2) (Thiomicrospira crunogena)).